Reading from the N-terminus, the 444-residue chain is ATP-dependent protease ATPase subunit HslU (444 aa).

Residues Ile-18, 60 to 65, Asp-256, Glu-322, and Arg-394 each bind ATP; that span reads GVGKTE.

This sequence belongs to the ClpX chaperone family. HslU subfamily. A double ring-shaped homohexamer of HslV is capped on each side by a ring-shaped HslU homohexamer. The assembly of the HslU/HslV complex is dependent on binding of ATP.

The protein resides in the cytoplasm. Functionally, ATPase subunit of a proteasome-like degradation complex; this subunit has chaperone activity. The binding of ATP and its subsequent hydrolysis by HslU are essential for unfolding of protein substrates subsequently hydrolyzed by HslV. HslU recognizes the N-terminal part of its protein substrates and unfolds these before they are guided to HslV for hydrolysis. In Serratia proteamaculans (strain 568), this protein is ATP-dependent protease ATPase subunit HslU.